The following is a 153-amino-acid chain: Ribosomal RNA large subunit methyltransferase H (153 aa).

S-adenosyl-L-methionine is bound by residues leucine 71 and glycine 102.

It belongs to the RNA methyltransferase RlmH family. Homodimer.

The protein localises to the cytoplasm. It carries out the reaction pseudouridine(1915) in 23S rRNA + S-adenosyl-L-methionine = N(3)-methylpseudouridine(1915) in 23S rRNA + S-adenosyl-L-homocysteine + H(+). In terms of biological role, specifically methylates the pseudouridine at position 1915 (m3Psi1915) in 23S rRNA. The chain is Ribosomal RNA large subunit methyltransferase H from Anaeromyxobacter dehalogenans (strain 2CP-C).